Consider the following 960-residue polypeptide: Dynamin-like GTPase OPA1, mitochondrial (960 aa).

The transit peptide at 1 to 87 directs the protein to the mitochondrion; sequence MWRAGRAALA…TKYGYQPRRN (87 aa). The Mitochondrial matrix portion of the chain corresponds to 88–96; that stretch reads FWPARLAAR. Residues 97 to 113 traverse the membrane as a helical segment; it reads LLKLRYIILGSAVGGGY. Topologically, residues 114 to 770 are mitochondrial intermembrane; that stretch reads TAKKTFDEWK…NAIENMIGPD (657 aa). The stretch at 210 to 254 forms a coiled coil; sequence SDKEKIDQLQEELLHTQLKYQRILERLEKENKELRKLVLQKDDKG. Residues 217 to 222 carry the LQQQIQ motif motif; that stretch reads QLQEEL. K228 bears the N6-acetyllysine mark. Residues 234–239 carry the LQQQIQ motif motif; that stretch reads ERLEKE. The Dynamin-type G domain maps to 285–561; sequence QDHLPRVVVV…FWKMVRESVE (277 aa). Positions 295-302 are G1 motif; sequence GDQSAGKT. Residues S298, G300, K301, T302, S303, and G317 each contribute to the GTP site. T302 contacts Mg(2+). The tract at residues 321–324 is G2 motif; sequence MMTR. Mg(2+) contacts are provided by T323 and D398. A G3 motif region spans residues 398–401; it reads DLPG. The G4 motif stretch occupies residues 467-470; it reads TKVD. K468, D470, and T503 together coordinate GTP. Residues 501–504 are G5 motif; sequence VVTG. Stalk region regions lie at residues 589-836 and 874-928; these read DRNE…IKDT and CNDV…VKLL. Residues 736-856 are paddle region; that stretch reads SDKQQWDAAI…KTALNHCNLC (121 aa). The stretch at 771–781 is an intramembrane region; sequence WKKRWIYWKNR. Residues 782–960 lie on the Mitochondrial intermembrane side of the membrane; the sequence is TQEQCVHNET…AFIEALHQEK (179 aa). C856 and C874 are joined by a disulfide. The stretch at 895-960 forms a coiled coil; sequence RQQLTNTEVR…AFIEALHQEK (66 aa).

The protein belongs to the TRAFAC class dynamin-like GTPase superfamily. Dynamin/Fzo/YdjA family. As to quaternary structure, oligomeric complex consisting of membrane-bound and soluble forms of OPA1. Interacts with RCC1L; RCC1L acts as a guanine nucleotide exchange factor (GEF) for OPA1 by exchanging bound GDP for free GTP. Interacts with CHCHD3 and IMMT; these interactions occur preferentially with soluble OPA1 forms. Interacts with PRELID1. In terms of processing, cleaved by OMA1 or YME1L downstream of the transmembrane region in response to different signals to generate soluble forms. Cleaved by OMA1 at position S1 following stress conditions, generating the short soluble form (Dynamin-like GTPase OPA1, short form; S-OPA1). AFG3L2 is involved in the regulation of OMA1-dependent processing of OPA1. PARL-dependent proteolytic processing releases an antiapoptotic soluble form not required for mitochondrial fusion. Cleavage at position S2 by YME1L is required to mediate oxidative phosphorylation (OXPHOS)-induced mitochondrial fusion. Cleavage occurs in the sequence motif Leu-Gln-Gln-Gln-Ile-Gln (LQQQIQ). As to expression, expressed in brain as well as retinal ganglion, starbust amacrine and horizontal cells of the retina. Absent from nerve fibers and photoreceptor cells of the retina.

The protein localises to the mitochondrion inner membrane. The protein resides in the mitochondrion intermembrane space. It carries out the reaction GTP + H2O = GDP + phosphate + H(+). Activated by guanine nucleotide exchange factor RCC1L. Dynamin-related GTPase that is essential for normal mitochondrial morphology by mediating fusion of the mitochondrial inner membranes, regulating cristae morphology and maintaining respiratory chain function. Exists in two forms: the transmembrane, long form (Dynamin-like GTPase OPA1, long form; L-OPA1), which is tethered to the inner mitochondrial membrane, and the short soluble form (Dynamin-like GTPase OPA1, short form; S-OPA1), which results from proteolytic cleavage and localizes in the intermembrane space. Both forms (L-OPA1 and S-OPA1) cooperate to catalyze the fusion of the mitochondrial inner membrane. The equilibrium between L-OPA1 and S-OPA1 is essential: excess levels of S-OPA1, produced by cleavage by OMA1 following loss of mitochondrial membrane potential, lead to an impaired equilibrium between L-OPA1 and S-OPA1, inhibiting mitochondrial fusion. The balance between L-OPA1 and S-OPA1 also influences cristae shape and morphology. Involved in remodeling cristae and the release of cytochrome c during apoptosis. Proteolytic processing by PARL in response to intrinsic apoptotic signals may lead to disassembly of OPA1 oligomers and release of the caspase activator cytochrome C (CYCS) into the mitochondrial intermembrane space. Acts as a regulator of T-helper Th17 cells, which are characterized by cells with fused mitochondria with tight cristae, by mediating mitochondrial membrane remodeling: OPA1 is required for interleukin-17 (IL-17) production. Its role in mitochondrial morphology is required for mitochondrial genome maintenance. Its function is as follows. Constitutes the transmembrane long form (L-OPA1) that plays a central role in mitochondrial inner membrane fusion and cristae morphology. L-OPA1 and the soluble short form (S-OPA1) form higher-order helical assemblies that coordinate the fusion of mitochondrial inner membranes. Inner membrane-anchored L-OPA1 molecules initiate membrane remodeling by recruiting soluble S-OPA1 to rapidly polymerize into a flexible cylindrical scaffold encaging the mitochondrial inner membrane. Once at the membrane surface, the formation of S-OPA1 helices induce bilayer curvature. OPA1 dimerization through the paddle region, which inserts into cardiolipin-containing membrane, promotes GTP hydrolysis and the helical assembly of a flexible OPA1 lattice on the membrane, which drives membrane curvature and mitochondrial fusion. Plays a role in the maintenance and remodeling of mitochondrial cristae, some invaginations of the mitochondrial inner membrane that provide an increase in the surface area. Probably acts by forming helical filaments at the inside of inner membrane tubes with the shape and dimensions of crista junctions. The equilibrium between L-OPA1 and S-OPA1 influences cristae shape and morphology: increased L-OPA1 levels promote cristae stacking and elongated mitochondria, while increased S-OPA1 levels correlated with irregular cristae packing and round mitochondria shape. In terms of biological role, constitutes the soluble short form (S-OPA1) generated by cleavage by OMA1, which plays a central role in mitochondrial inner membrane fusion and cristae morphology. The transmembrane long form (L-OPA1) and the S-OPA1 form higher-order helical assemblies that coordinate the fusion of mitochondrial inner membranes. Inner membrane-anchored L-OPA1 molecules initiate membrane remodeling by recruiting soluble S-OPA1 to rapidly polymerize into a flexible cylindrical scaffold encaging the mitochondrial inner membrane. Once at the membrane surface, the formation of S-OPA1 helices induce bilayer curvature. OPA1 dimerization through the paddle region, which inserts into cardiolipin-containing membrane, promotes GTP hydrolysis and the helical assembly of a flexible OPA1 lattice on the membrane, which drives membrane curvature and mitochondrial fusion. Excess levels of S-OPA1 produced by cleavage by OMA1 following stress conditions that induce loss of mitochondrial membrane potential, lead to an impaired equilibrium between L-OPA1 and S-OPA1, thereby inhibiting mitochondrial fusion. Involved in mitochondrial safeguard in response to transient mitochondrial membrane depolarization by mediating flickering: cleavage by OMA1 leads to excess production of S-OPA1, preventing mitochondrial hyperfusion. Plays a role in the maintenance and remodeling of mitochondrial cristae, some invaginations of the mitochondrial inner membrane that provide an increase in the surface area. Probably acts by forming helical filaments at the inside of inner membrane tubes with the shape and dimensions of crista junctions. The equilibrium between L-OPA1 and S-OPA1 influences cristae shape and morphology: increased L-OPA1 levels promote cristae stacking and elongated mitochondria, while increased S-OPA1 levels correlated with irregular cristae packing and round mitochondria shape. Functionally, isoforms that contain the alternative exon 4b are required for mitochondrial genome maintenance, possibly by anchoring the mitochondrial nucleoids to the inner mitochondrial membrane. This is Dynamin-like GTPase OPA1, mitochondrial from Rattus norvegicus (Rat).